Reading from the N-terminus, the 827-residue chain is MKERYDFKEIEEKWQARWAAQDLYAVPDYSDRPKYYCLEMFPYPSGKLHMGHVRNYSIGDVVARFKTMQGYHVLHPMGWDAFGLPAENAAIKHGGVHPAEWTLDNIESMRAQLKQLGISYDWNREVATCHPGYYRWTQWLFLQLFHNGLAYKKKAAVNWCPGCATVLANEQVKDGGCERCKAPVEKRELEQWFFKITDYAERLLKDLELLEGWPEKVKIMQENWIGRSEGAEIDFKVEGSDDIITVYTTRPDTVFGVTYMVLAPEHPLVEKLIAGSKQEAEIKEFIRKVRNLREIDRTSTEAEKVGMPTGAHCINPLTGEKVPVLIANYVLMEYGTGCVMGVPAHDQRDFEFARKYGYPIRVVIQPPGVELDPAAMEAAYEEEGFLVNSGPFSGMPNKEAIRAITRHLEEKGRGRFRVTYRLRDWLISRQRYWGAPIPIIYCDRCGTVPVPESDLPVLLPMDVEFKPTGQSPLAECPEFVNAACPSCGGPGKRETDTMDTFMCSSWYYYRYTSPRDNDAPWDRNKVDYWLPVDQYIGGVEHAILHLLYSRFFTKVLYDLKLVSNLEPFSNLLTQGMVLKDGAKMSKSRGNVVSPEDIVARYGADTARLFILFAAPPERDLEWSDQGVEGCYRFLNRVWRLVMPLAGLLKEAPAAVSGKLVGANREMRRVTHSTIKKVTEDISARFNFNTAVSAIMELVNALYQFREIPESDRNPAVLREAVESLLLLLAPFAPHITEELWEATGHRGSIHLQPWPSYDPEAIAEDEITIVVQINGRVRERLLVPAGITPQEMQDRVMKEPRVMRMVEGKKVAKVITVPGKLVNIVIK.

The 'HIGH' region motif lies at 42 to 52; the sequence is PYPSGKLHMGH. A 'KMSKS' region motif is present at residues 583-587; the sequence is KMSKS. K586 contacts ATP.

This sequence belongs to the class-I aminoacyl-tRNA synthetase family.

It localises to the cytoplasm. It carries out the reaction tRNA(Leu) + L-leucine + ATP = L-leucyl-tRNA(Leu) + AMP + diphosphate. In Pelotomaculum thermopropionicum (strain DSM 13744 / JCM 10971 / SI), this protein is Leucine--tRNA ligase.